The chain runs to 144 residues: Large ribosomal subunit protein uL11 (144 aa).

It belongs to the universal ribosomal protein uL11 family. In terms of assembly, part of the ribosomal stalk of the 50S ribosomal subunit. Interacts with L10 and the large rRNA to form the base of the stalk. L10 forms an elongated spine to which L12 dimers bind in a sequential fashion forming a multimeric L10(L12)X complex. Contacts the CTC protein (RL25). Post-translationally, one or more lysine residues are methylated.

In terms of biological role, forms part of the ribosomal stalk which helps the ribosome interact with GTP-bound translation factors. The sequence is that of Large ribosomal subunit protein uL11 from Deinococcus radiodurans (strain ATCC 13939 / DSM 20539 / JCM 16871 / CCUG 27074 / LMG 4051 / NBRC 15346 / NCIMB 9279 / VKM B-1422 / R1).